The chain runs to 433 residues: Ribulose bisphosphate carboxylase/oxygenase activase, chloroplastic (433 aa).

Polar residues predominate over residues 1-20; sequence MAAAFSSTVGAPASTPTRSS. Residues 1–53 constitute a chloroplast transit peptide; that stretch reads MAAAFSSTVGAPASTPTRSSFLGKKLNKPQVSAAVTYHGKSSSSNSRFKAMAA. Residues 1–60 are disordered; sequence MAAAFSSTVGAPASTPTRSSFLGKKLNKPQVSAAVTYHGKSSSSNSRFKAMAAKEVDETK. Position 161-168 (161-168) interacts with ATP; the sequence is GGKGQGKS.

Belongs to the RuBisCO activase family.

It localises to the plastid. The protein resides in the chloroplast stroma. Its function is as follows. Activation of RuBisCO (ribulose-1,5-bisphosphate carboxylase/oxygenase; EC 4.1.1.39) involves the ATP-dependent carboxylation of the epsilon-amino group of lysine leading to a carbamate structure. The protein is Ribulose bisphosphate carboxylase/oxygenase activase, chloroplastic (RCA1) of Zea mays (Maize).